Consider the following 447-residue polypeptide: Serine/threonine-protein phosphatase 2A 55 kDa regulatory subunit B gamma isoform (447 aa).

7 WD repeats span residues 22-61, 87-128, 171-209, 220-260, 279-317, 334-375, and 410-446; these read TEAD…KNAP, EIEE…KRPE, GHTY…RSFN, DLTE…LCDK, EIIS…RPIE, ESDC…DVTL, and DFTK…NSDM.

The protein belongs to the phosphatase 2A regulatory subunit B family. As to quaternary structure, PP2A consists of a common heterodimeric core enzyme, composed of a 36 kDa catalytic subunit (subunit C) and a 65 kDa constant regulatory subunit (PR65 or subunit A), that associates with a variety of regulatory subunits. Proteins that associate with the core dimer include three families of regulatory subunits B (the R2/B/PR55/B55, R3/B''/PR72/PR130/PR59 and R5/B'/B56 families), the 48 kDa variable regulatory subunit, viral proteins, and cell signaling molecules. Interacts with IER5. In terms of tissue distribution, highly expressed in brain.

The B regulatory subunit might modulate substrate selectivity and catalytic activity, and might also direct the localization of the catalytic enzyme to a particular subcellular compartment. This Rattus norvegicus (Rat) protein is Serine/threonine-protein phosphatase 2A 55 kDa regulatory subunit B gamma isoform (Ppp2r2c).